Reading from the N-terminus, the 238-residue chain is Ribonuclease PH (238 aa).

Residues Arg86 and Gly124–Arg126 each bind phosphate.

It belongs to the RNase PH family. Homohexameric ring arranged as a trimer of dimers.

The catalysed reaction is tRNA(n+1) + phosphate = tRNA(n) + a ribonucleoside 5'-diphosphate. In terms of biological role, phosphorolytic 3'-5' exoribonuclease that plays an important role in tRNA 3'-end maturation. Removes nucleotide residues following the 3'-CCA terminus of tRNAs; can also add nucleotides to the ends of RNA molecules by using nucleoside diphosphates as substrates, but this may not be physiologically important. Probably plays a role in initiation of 16S rRNA degradation (leading to ribosome degradation) during starvation. This Trichlorobacter lovleyi (strain ATCC BAA-1151 / DSM 17278 / SZ) (Geobacter lovleyi) protein is Ribonuclease PH.